Consider the following 1391-residue polypeptide: DNA-directed RNA polymerase subunit beta' (1391 aa).

4 residues coordinate Zn(2+): Cys-72, Cys-74, Cys-87, and Cys-90. Asp-462, Asp-464, and Asp-466 together coordinate Mg(2+). The Zn(2+) site is built by Cys-816, Cys-890, Cys-897, and Cys-900.

Belongs to the RNA polymerase beta' chain family. In terms of assembly, the RNAP catalytic core consists of 2 alpha, 1 beta, 1 beta' and 1 omega subunit. When a sigma factor is associated with the core the holoenzyme is formed, which can initiate transcription. Mg(2+) serves as cofactor. Zn(2+) is required as a cofactor.

The enzyme catalyses RNA(n) + a ribonucleoside 5'-triphosphate = RNA(n+1) + diphosphate. Functionally, DNA-dependent RNA polymerase catalyzes the transcription of DNA into RNA using the four ribonucleoside triphosphates as substrates. This chain is DNA-directed RNA polymerase subunit beta', found in Neisseria meningitidis serogroup C (strain 053442).